We begin with the raw amino-acid sequence, 538 residues long: Serine/threonine-protein phosphatase 5 (538 aa).

3 TPR repeats span residues 13–46 (AEEF…NSNN), 48–80 (VYWA…DSRY), and 81–114 (SKGY…SPND). A run of 2 helical transmembrane segments spans residues 163-183 (SSMP…VVAV) and 185-205 (GFAT…TFWW). Mn(2+) is bound by residues aspartate 282, histidine 284, aspartate 311, and asparagine 343. The active-site Proton donor is the histidine 344. Positions 392 and 467 each coordinate Mn(2+).

It belongs to the PPP phosphatase family. PP-5 (PP-T) subfamily. In terms of assembly, interacts with PHYA and PHYB, mostly when they are phosphorylated and in Pfr forms. Mn(2+) serves as cofactor.

Its subcellular location is the endoplasmic reticulum membrane. It localises to the nucleus membrane. The protein localises to the cytoplasm. It is found in the nucleus. The protein resides in the nucleoplasm. Its subcellular location is the nucleus speckle. The enzyme catalyses O-phospho-L-seryl-[protein] + H2O = L-seryl-[protein] + phosphate. The catalysed reaction is O-phospho-L-threonyl-[protein] + H2O = L-threonyl-[protein] + phosphate. With respect to regulation, activated by arachidonic acid (AA). Isoform 2 dephosphorylates phosphorylated phytochromes, with a preference toward Pfr forms, and enhances phytochrome-mediated photoresponses, probably by enhancing their stability and their binding affinity for light signal transducers such as NDPK2. Can use para-nitrophenylphosphate (pNPP) as substrate. This Arabidopsis thaliana (Mouse-ear cress) protein is Serine/threonine-protein phosphatase 5 (PAPP5).